The chain runs to 251 residues: Carbohydrate deacetylase (251 aa).

Mg(2+)-binding residues include His59 and His122.

Belongs to the YdjC deacetylase family. As to quaternary structure, homodimer. It depends on Mg(2+) as a cofactor.

In terms of biological role, probably catalyzes the deacetylation of acetylated carbohydrates an important step in the degradation of oligosaccharides. The sequence is that of Carbohydrate deacetylase from Vibrio campbellii (strain ATCC BAA-1116).